We begin with the raw amino-acid sequence, 334 residues long: MSSVQENLITNVCQDKAAKPTNKITIVGVGQVGMACAVSVLLKELADELALVDILEDKLKGEVMDLQHGSLFLKTPTIVADKDYSVTANSRIVVVTGGVRQQEGESALNLVQRNVNVFKFIIPQVVKYSPDCIIIVVSNPVDILTYVTWKLSGLPQHRIIGSGTNLDSARFRHLISEKLGVHPSSCHGFILGEHGDTSVAVWSGVNVAGVSLQSLKPEIGTDQDSCNWKEVHKKVVDSAYEVIKLKGYTNWAIGFSVAEIVESITKNLGRVHPVSTMVKGMYGIETEVFLSLPCVLNGNGLTSVISQKLKDDEVGQLQKSSETLWGIQKDLQVL.

Residues 30–58 (GQVG…LEDK), Arg-100, and Asn-139 contribute to the NAD(+) site. Residues Asn-139 and Arg-170 each coordinate substrate. The active-site Proton acceptor is His-194. Thr-249 contributes to the substrate binding site.

Belongs to the LDH/MDH superfamily. LDH family. In terms of assembly, homotetramer.

It localises to the cytoplasm. It carries out the reaction (S)-lactate + NAD(+) = pyruvate + NADH + H(+). Its pathway is fermentation; pyruvate fermentation to lactate; (S)-lactate from pyruvate: step 1/1. The chain is L-lactate dehydrogenase C chain (ldhc) from Xenopus laevis (African clawed frog).